Here is a 295-residue protein sequence, read N- to C-terminus: Lipase 2 (295 aa).

The signal sequence occupies residues 1 to 31 (MPKPALRRVMTATVAAVGTLALGLTDATAHA). Catalysis depends on serine 48, which acts as the Nucleophile. 3 disulfides stabilise this stretch: cysteine 65–cysteine 89, cysteine 138–cysteine 152, and cysteine 205–cysteine 254. Histidine 275 is a catalytic residue.

This sequence belongs to the 'GDSL' lipolytic enzyme family. In terms of assembly, monomer.

The protein localises to the secreted. It carries out the reaction a triacylglycerol + H2O = a diacylglycerol + a fatty acid + H(+). Its activity is regulated as follows. Strongly inhibited by Ag(+). The cations Ca(2+) and Mg(2+) do not significantly reduce the lipolytic activity of SCO7513, whereas high concentrations of Co(2+) and Cu(2+) partially inhibit it. Is not inhibited by DTT in vitro. Is resistant to PMSF inhibition, except in the presence of Ca(2+). Functionally, catalyzes the hydrolysis of fatty acid esters with a preference for long chain fatty acids (C16-C18). In Streptomyces coelicolor (strain ATCC BAA-471 / A3(2) / M145), this protein is Lipase 2.